The chain runs to 168 residues: G/U mismatch-specific DNA glycosylase (168 aa).

Belongs to the uracil-DNA glycosylase (UDG) superfamily. TDG/mug family. As to quaternary structure, binds DNA as a monomer.

Its subcellular location is the cytoplasm. It carries out the reaction Specifically hydrolyzes mismatched double-stranded DNA and polynucleotides, releasing free uracil.. Its function is as follows. Excises ethenocytosine and uracil, which can arise by alkylation or deamination of cytosine, respectively, from the corresponding mispairs with guanine in ds-DNA. It is capable of hydrolyzing the carbon-nitrogen bond between the sugar-phosphate backbone of the DNA and the mispaired base. The complementary strand guanine functions in substrate recognition. Required for DNA damage lesion repair in stationary-phase cells. This chain is G/U mismatch-specific DNA glycosylase, found in Klebsiella pneumoniae subsp. pneumoniae (strain ATCC 700721 / MGH 78578).